Consider the following 273-residue polypeptide: HTH-type transcriptional activator RhaS (273 aa).

The region spanning 174–272 is the HTH araC/xylS-type domain; sequence YQLLDWLQNN…SQSPRDLRSQ (99 aa). 2 DNA-binding regions (H-T-H motif) span residues 191–212 and 239–262; these read PELADRFALPLRTLHRQLKNKT and VTDIAYLCGFGDSNHFSTLFKREF.

Binds DNA as a dimer.

Its subcellular location is the cytoplasm. Its function is as follows. Activates expression of the rhaBAD and rhaT operons. The polypeptide is HTH-type transcriptional activator RhaS (Yersinia pseudotuberculosis serotype I (strain IP32953)).